The primary structure comprises 185 residues: NOP protein chaperone 1 (185 aa).

Phosphoserine occurs at positions 34, 66, and 177. The disordered stretch occupies residues 121–185; that stretch reads SRSDSKEEDS…DSPASKKKKQ (65 aa).

In terms of assembly, interacts with NOP58, RUVBL1 and RUVBL2; the interactions are direct and NOPCHAP1 bridges the association of NOP58 with RUVBL1:RUVBL2 even in absence of snoRNAs. The interactions with RUVBL1 and RUVBL2 are disrupted upon ATP binding.

The protein resides in the nucleus. Its function is as follows. Client-loading PAQosome/R2TP complex cofactor that selects NOP58 to promote box C/D small nucleolar ribonucleoprotein (snoRNP) assembly. Acts as a bridge between NOP58 and the R2TP complex via RUVBL1:RUVBL2. The chain is NOP protein chaperone 1 from Mus musculus (Mouse).